A 156-amino-acid chain; its full sequence is Small ribosomal subunit protein uS7 (156 aa).

The protein belongs to the universal ribosomal protein uS7 family. Part of the 30S ribosomal subunit. Contacts proteins S9 and S11.

Functionally, one of the primary rRNA binding proteins, it binds directly to 16S rRNA where it nucleates assembly of the head domain of the 30S subunit. Is located at the subunit interface close to the decoding center, probably blocks exit of the E-site tRNA. The polypeptide is Small ribosomal subunit protein uS7 (Laribacter hongkongensis (strain HLHK9)).